Consider the following 314-residue polypeptide: Olfactory receptor 2W3 (314 aa).

Topologically, residues 1 to 25 (MDGTNGSTQTHFILLGFSDRPHLER) are extracellular. N-linked (GlcNAc...) asparagine glycosylation occurs at N5. The chain crosses the membrane as a helical span at residues 26–49 (ILFVVILIAYLLTLVGNTTIILVS). Over 50-57 (RLDPHLHT) the chain is Cytoplasmic. The helical transmembrane segment at 58 to 79 (PMYFFLAHLSFLDLSFTTSSIP) threads the bilayer. Over 80–100 (QLLYNLNGCDKTISYMGCAIQ) the chain is Extracellular. A helical transmembrane segment spans residues 101 to 120 (LFLFLGLGGVECLLLAVMAY). The Cytoplasmic portion of the chain corresponds to 121 to 139 (DRCVAICKPLHYMVIMNPR). A helical membrane pass occupies residues 140-158 (LCRGLVSVTWGCGVANSLA). At 159 to 195 (MSPVTLRLPRCGHHEVDHFLREMPALIRMACVSTVAI) the chain is on the extracellular side. A helical membrane pass occupies residues 196-219 (EGTVFVLAVGVVLSPLVFILLSYS). Over 220–236 (YIVRAVLQIRSASGRQK) the chain is Cytoplasmic. The helical transmembrane segment at 237 to 259 (AFGTCGSHLTVVSLFYGNIIYMY) threads the bilayer. The Extracellular segment spans residues 260-272 (MQPGASSSQDQGM). A helical transmembrane segment spans residues 273–292 (FLMLFYNIVTPLLNPLIYTL). Residues 293-314 (RNREVKGALGRLLLGKRELGKE) are Cytoplasmic-facing.

This sequence belongs to the G-protein coupled receptor 1 family.

It is found in the cell membrane. Functionally, odorant receptor. In Homo sapiens (Human), this protein is Olfactory receptor 2W3 (OR2W3).